A 510-amino-acid polypeptide reads, in one-letter code: Inositol-3-phosphate synthase (510 aa).

Positions 70, 71, 72, 73, 143, 180, 190, 193, 230, 231, 232, 233, 281, 282, 306, 309, 340, 341, 342, 355, 393, 394, 422, and 423 each coordinate NAD(+).

Belongs to the myo-inositol 1-phosphate synthase family. NAD(+) serves as cofactor.

The protein localises to the cytoplasm. It localises to the cytosol. Its subcellular location is the nucleus. The enzyme catalyses D-glucose 6-phosphate = 1D-myo-inositol 3-phosphate. It participates in polyol metabolism; myo-inositol biosynthesis; myo-inositol from D-glucose 6-phosphate: step 1/2. Its function is as follows. Key enzyme in myo-inositol biosynthesis pathway that catalyzes the conversion of glucose 6-phosphate to 1-myo-inositol 1-phosphate in a NAD-dependent manner. The sequence is that of Inositol-3-phosphate synthase from Hordeum vulgare (Barley).